Reading from the N-terminus, the 239-residue chain is Small ribosomal subunit protein uS2 (239 aa).

Belongs to the universal ribosomal protein uS2 family.

The sequence is that of Small ribosomal subunit protein uS2 from Prochlorococcus marinus (strain MIT 9313).